A 760-amino-acid polypeptide reads, in one-letter code: Acetyl-CoA decarbonylase/synthase complex subunit alpha 1 (760 aa).

[4Fe-4S] cluster contacts are provided by Cys-56, Cys-59, Cys-60, Cys-62, Cys-67, and Cys-77. His-100 provides a ligand contact to CO. Residues His-231, Cys-259, and Cys-298 each contribute to the [Ni-4Fe-4S] cluster site. 2 consecutive 4Fe-4S ferredoxin-type domains span residues 381-410 and 418-450; these read KKLQ…VEAM and FEGL…MIED. [4Fe-4S] cluster-binding residues include Cys-390, Cys-393, Cys-396, Cys-400, Cys-428, Cys-431, Cys-434, and Cys-438. The [Ni-4Fe-4S] cluster site is built by Cys-496, Cys-525, and Cys-560.

It belongs to the Ni-containing carbon monoxide dehydrogenase family. Heterotetramer of two alpha and two epsilon subunits. The ACDS complex is made up of alpha, epsilon, beta, gamma and delta subunits with a probable stoichiometry of (alpha(2)epsilon(2))(4)-beta(8)-(gamma(1)delta(1))(8). It depends on [4Fe-4S] cluster as a cofactor. Requires [Ni-4Fe-4S] cluster as cofactor.

It carries out the reaction CO + 2 oxidized [2Fe-2S]-[ferredoxin] + H2O = 2 reduced [2Fe-2S]-[ferredoxin] + CO2 + 2 H(+). Its function is as follows. Part of the ACDS complex that catalyzes the reversible cleavage of acetyl-CoA, allowing autotrophic growth from CO(2). The alpha-epsilon subcomponent functions as a carbon monoxide dehydrogenase. The sequence is that of Acetyl-CoA decarbonylase/synthase complex subunit alpha 1 from Methanopyrus kandleri (strain AV19 / DSM 6324 / JCM 9639 / NBRC 100938).